Here is a 426-residue protein sequence, read N- to C-terminus: Glutamate-1-semialdehyde 2,1-aminomutase (426 aa).

Position 265 is an N6-(pyridoxal phosphate)lysine (Lys-265).

Belongs to the class-III pyridoxal-phosphate-dependent aminotransferase family. HemL subfamily. In terms of assembly, homodimer. Requires pyridoxal 5'-phosphate as cofactor.

The protein localises to the cytoplasm. The catalysed reaction is (S)-4-amino-5-oxopentanoate = 5-aminolevulinate. The protein operates within porphyrin-containing compound metabolism; protoporphyrin-IX biosynthesis; 5-aminolevulinate from L-glutamyl-tRNA(Glu): step 2/2. The chain is Glutamate-1-semialdehyde 2,1-aminomutase from Neisseria gonorrhoeae (strain NCCP11945).